The sequence spans 178 residues: ATP-dependent protease subunit HslV (178 aa).

Residue Thr7 is part of the active site. The Na(+) site is built by Gly162, Cys165, and Thr168.

It belongs to the peptidase T1B family. HslV subfamily. As to quaternary structure, a double ring-shaped homohexamer of HslV is capped on each side by a ring-shaped HslU homohexamer. The assembly of the HslU/HslV complex is dependent on binding of ATP.

Its subcellular location is the cytoplasm. The enzyme catalyses ATP-dependent cleavage of peptide bonds with broad specificity.. With respect to regulation, allosterically activated by HslU binding. Its function is as follows. Protease subunit of a proteasome-like degradation complex believed to be a general protein degrading machinery. This Burkholderia vietnamiensis (strain G4 / LMG 22486) (Burkholderia cepacia (strain R1808)) protein is ATP-dependent protease subunit HslV.